The following is a 260-amino-acid chain: Dehydrin ERD10 (260 aa).

3 disordered regions span residues 1–187 (MAEE…EEEK), 197–216 (KLPG…TTPL), and 240–260 (KLPG…KVSD). The residue at position 2 (Ala-2) is an N-acetylalanine. The segment covering 26–44 (EIKERGMFDFLKKKEEVKP) has biased composition (basic and acidic residues). Ser-61 carries the phosphoserine modification. 5 stretches are compositionally biased toward basic and acidic residues: residues 67–102 (VAKH…DKLH), 130–140 (IVEGDHVKTVE), 148–162 (DRIK…KPGG), 176–187 (SVEDHKPEEEEK), and 197–207 (KLPGHSKKPED). 2 repeat units span residues 184–204 (EEEK…HSKK) and 227–247 (PEEK…YHAK). The 2 X 21 AA repeats, Lys-rich stretch occupies residues 184-247 (EEEKKGFMDK…KEKLPGYHAK (64 aa)).

The protein belongs to the plant dehydrin family. As to expression, in stems, cauline leaves, roots and flowers. Low levels found in maturing seeds. Absent in dry seeds.

In Arabidopsis thaliana (Mouse-ear cress), this protein is Dehydrin ERD10 (ERD10).